A 95-amino-acid chain; its full sequence is Mammaglobin-B (95 aa).

An N-terminal signal peptide occupies residues 1-18; sequence MKLLMVLMLAALLLHCYA. Asn-68 carries an N-linked (GlcNAc...) asparagine glycan.

As to quaternary structure, heterodimer of a lipophilin A and a lipophilin C (mammaglobin B) monomer associated head to head. Expressed in thymus, trachea, kidney, steroid responsive tissues (prostate, testis, uterus, breast and ovary) and salivary gland.

Its subcellular location is the secreted. Its function is as follows. May bind androgens and other steroids, may also bind estramustine, a chemotherapeutic agent used for prostate cancer. May be under transcriptional regulation of steroid hormones. The polypeptide is Mammaglobin-B (SCGB2A1) (Homo sapiens (Human)).